A 25-amino-acid polypeptide reads, in one-letter code: Cysteine protease inhibitor 2 (25 aa).

It belongs to the protease inhibitor I3 (leguminous Kunitz-type inhibitor) family. As to expression, cortex of tuber.

Inhibitor of subtilisin. Inhibits moderately trypsin and chymotrypsin (serine proteases). May protect the plant by inhibiting proteases of invading organisms. The sequence is that of Cysteine protease inhibitor 2 from Solanum tuberosum (Potato).